Reading from the N-terminus, the 177-residue chain is Large ribosomal subunit protein uL6 (177 aa).

This sequence belongs to the universal ribosomal protein uL6 family. Part of the 50S ribosomal subunit.

This protein binds to the 23S rRNA, and is important in its secondary structure. It is located near the subunit interface in the base of the L7/L12 stalk, and near the tRNA binding site of the peptidyltransferase center. This chain is Large ribosomal subunit protein uL6, found in Paracidovorax citrulli (strain AAC00-1) (Acidovorax citrulli).